The primary structure comprises 900 residues: Nitrate reductase [NADH] (900 aa).

A Mo-molybdopterin-binding site is contributed by Cys-172. One can recognise a Cytochrome b5 heme-binding domain in the interval 521–596 (TKMYSLSEVK…LEDYRVGELI (76 aa)). Heme contacts are provided by His-556 and His-579. Residues 644 to 756 (REKIPCKLIS…KGPLGHIEYT (113 aa)) form the FAD-binding FR-type domain. FAD contacts are provided by residues 696-699 (RAYT), 713-717 (VVKVY), Phe-718, Phe-725, 730-732 (AMS), and Thr-783.

Belongs to the nitrate reductase family. Homodimer. Requires FAD as cofactor. The cofactor is heme. Mo-molybdopterin is required as a cofactor.

It catalyses the reaction nitrite + NAD(+) + H2O = nitrate + NADH + H(+). Nitrate reductase is a key enzyme involved in the first step of nitrate assimilation in plants, fungi and bacteria. This chain is Nitrate reductase [NADH] (NIA), found in Lotus japonicus (Lotus corniculatus var. japonicus).